The sequence spans 370 residues: tRNA 2-selenouridine synthase (370 aa).

A Rhodanese domain is found at phenylalanine 12–glutamine 136. Cysteine 95 (S-selanylcysteine intermediate) is an active-site residue.

The protein belongs to the SelU family. Monomer.

It catalyses the reaction 5-methylaminomethyl-2-thiouridine(34) in tRNA + selenophosphate + (2E)-geranyl diphosphate + H2O + H(+) = 5-methylaminomethyl-2-selenouridine(34) in tRNA + (2E)-thiogeraniol + phosphate + diphosphate. The catalysed reaction is 5-methylaminomethyl-2-thiouridine(34) in tRNA + (2E)-geranyl diphosphate = 5-methylaminomethyl-S-(2E)-geranyl-thiouridine(34) in tRNA + diphosphate. The enzyme catalyses 5-methylaminomethyl-S-(2E)-geranyl-thiouridine(34) in tRNA + selenophosphate + H(+) = 5-methylaminomethyl-2-(Se-phospho)selenouridine(34) in tRNA + (2E)-thiogeraniol. It carries out the reaction 5-methylaminomethyl-2-(Se-phospho)selenouridine(34) in tRNA + H2O = 5-methylaminomethyl-2-selenouridine(34) in tRNA + phosphate. In terms of biological role, involved in the post-transcriptional modification of the uridine at the wobble position (U34) of tRNA(Lys), tRNA(Glu) and tRNA(Gln). Catalyzes the conversion of 2-thiouridine (S2U-RNA) to 2-selenouridine (Se2U-RNA). Acts in a two-step process involving geranylation of 2-thiouridine (S2U) to S-geranyl-2-thiouridine (geS2U) and subsequent selenation of the latter derivative to 2-selenouridine (Se2U) in the tRNA chain. This Pseudomonas putida (strain ATCC 700007 / DSM 6899 / JCM 31910 / BCRC 17059 / LMG 24140 / F1) protein is tRNA 2-selenouridine synthase.